The sequence spans 170 residues: Adenine phosphoribosyltransferase (170 aa).

The protein belongs to the purine/pyrimidine phosphoribosyltransferase family. In terms of assembly, homodimer.

The protein localises to the cytoplasm. It carries out the reaction AMP + diphosphate = 5-phospho-alpha-D-ribose 1-diphosphate + adenine. Its pathway is purine metabolism; AMP biosynthesis via salvage pathway; AMP from adenine: step 1/1. Catalyzes a salvage reaction resulting in the formation of AMP, that is energically less costly than de novo synthesis. The polypeptide is Adenine phosphoribosyltransferase (Maridesulfovibrio salexigens (strain ATCC 14822 / DSM 2638 / NCIMB 8403 / VKM B-1763) (Desulfovibrio salexigens)).